Consider the following 534-residue polypeptide: GMP synthase [glutamine-hydrolyzing] (534 aa).

Residues 20 to 210 (PVLVIDFGAQ…LLVGAGCRPS (191 aa)) enclose the Glutamine amidotransferase type-1 domain. Cys-97 (nucleophile) is an active-site residue. Residues His-184 and Glu-186 contribute to the active site. One can recognise a GMPS ATP-PPase domain in the interval 211 to 408 (WTMINIVEEA…LGLPEDIVWR (198 aa)). An ATP-binding site is contributed by 238–244 (SGGVDSA).

In terms of assembly, homodimer.

The enzyme catalyses XMP + L-glutamine + ATP + H2O = GMP + L-glutamate + AMP + diphosphate + 2 H(+). It participates in purine metabolism; GMP biosynthesis; GMP from XMP (L-Gln route): step 1/1. Catalyzes the synthesis of GMP from XMP. This is GMP synthase [glutamine-hydrolyzing] from Parafrankia sp. (strain EAN1pec).